Consider the following 581-residue polypeptide: Proline--tRNA ligase (581 aa).

This sequence belongs to the class-II aminoacyl-tRNA synthetase family. ProS type 1 subfamily. In terms of assembly, homodimer.

It is found in the cytoplasm. The catalysed reaction is tRNA(Pro) + L-proline + ATP = L-prolyl-tRNA(Pro) + AMP + diphosphate. Functionally, catalyzes the attachment of proline to tRNA(Pro) in a two-step reaction: proline is first activated by ATP to form Pro-AMP and then transferred to the acceptor end of tRNA(Pro). As ProRS can inadvertently accommodate and process non-cognate amino acids such as alanine and cysteine, to avoid such errors it has two additional distinct editing activities against alanine. One activity is designated as 'pretransfer' editing and involves the tRNA(Pro)-independent hydrolysis of activated Ala-AMP. The other activity is designated 'posttransfer' editing and involves deacylation of mischarged Ala-tRNA(Pro). The misacylated Cys-tRNA(Pro) is not edited by ProRS. The chain is Proline--tRNA ligase from Paracidovorax citrulli (strain AAC00-1) (Acidovorax citrulli).